Here is a 102-residue protein sequence, read N- to C-terminus: Small ribosomal subunit protein uS10 (102 aa).

This sequence belongs to the universal ribosomal protein uS10 family. In terms of assembly, part of the 30S ribosomal subunit.

Functionally, involved in the binding of tRNA to the ribosomes. The chain is Small ribosomal subunit protein uS10 from Caldanaerobacter subterraneus subsp. tengcongensis (strain DSM 15242 / JCM 11007 / NBRC 100824 / MB4) (Thermoanaerobacter tengcongensis).